Reading from the N-terminus, the 547-residue chain is DNA polymerase kappa (547 aa).

The segment at 18-39 (LTIEDDGSSSSDEEATLKRRLA) is disordered. A compositionally biased stretch (acidic residues) spans 20–31 (IEDDGSSSSDEE). Residues 132–316 (IVHVDCDAFY…LPVREVSGIG (185 aa)) form the UmuC domain. Residues D136 and D226 each coordinate Mg(2+). The UBZ4-type zinc-finger motif lies at 489 to 518 (TVPCPVCQKNIENELGILNQHVDLCLNVET). C492, C495, H509, and C513 together coordinate Zn(2+).

As to quaternary structure, interacts with hus1 and rad17.

It localises to the cytoplasm. Its subcellular location is the nucleus. The enzyme catalyses DNA(n) + a 2'-deoxyribonucleoside 5'-triphosphate = DNA(n+1) + diphosphate. Its function is as follows. DNA polymerase specifically involved in DNA repair. Plays an important role in translesion synthesis, where the normal high-fidelity DNA polymerases cannot proceed and DNA synthesis stalls. Has a role in meiosis. The chain is DNA polymerase kappa (mug40) from Schizosaccharomyces pombe (strain 972 / ATCC 24843) (Fission yeast).